A 318-amino-acid chain; its full sequence is Large ribosomal subunit protein uL10 (318 aa).

Tyrosine 24 carries the post-translational modification Phosphotyrosine. The residue at position 59 (threonine 59) is a Phosphothreonine. Lysine 264 participates in a covalent cross-link: Glycyl lysine isopeptide (Lys-Gly) (interchain with G-Cter in ubiquitin). The segment at 293-318 (TAAPAKVEAKEESEESDEDMGFGLFD) is disordered. Residue lysine 298 forms a Glycyl lysine isopeptide (Lys-Gly) (interchain with G-Cter in SUMO1); alternate linkage. Residue lysine 298 forms a Glycyl lysine isopeptide (Lys-Gly) (interchain with G-Cter in SUMO2); alternate linkage. Residues 303 to 312 (EESEESDEDM) show a composition bias toward acidic residues. A phosphoserine mark is found at serine 305 and serine 308.

This sequence belongs to the universal ribosomal protein uL10 family. P0 forms a pentameric complex by interaction with dimers of P1 and P2. Identified in a IGF2BP1-dependent mRNP granule complex containing untranslated mRNAs. Interacts with APEX1. Interacts with FMR1. Ubiquitinated at Lys-264 by RNF14 and RNF25 in response to ribosome collisions (ribosome stalling).

The protein localises to the nucleus. The protein resides in the cytoplasm. Its function is as follows. Ribosomal protein P0 is the functional equivalent of E.coli protein L10. This Bos taurus (Bovine) protein is Large ribosomal subunit protein uL10 (RPLP0).